The sequence spans 183 residues: Hypoxanthine-guanine phosphoribosyltransferase (183 aa).

The diphosphate site is built by arginine 47 and glycine 48. Mg(2+) is bound by residues glutamate 103 and aspartate 104. The active-site Proton acceptor is the aspartate 107. GMP contacts are provided by residues lysine 134, 155–156 (FV), and aspartate 162. Arginine 168 is a binding site for diphosphate.

The protein belongs to the purine/pyrimidine phosphoribosyltransferase family. The cofactor is Mg(2+).

The protein localises to the cytoplasm. The catalysed reaction is IMP + diphosphate = hypoxanthine + 5-phospho-alpha-D-ribose 1-diphosphate. It catalyses the reaction GMP + diphosphate = guanine + 5-phospho-alpha-D-ribose 1-diphosphate. It functions in the pathway purine metabolism; IMP biosynthesis via salvage pathway; IMP from hypoxanthine: step 1/1. It participates in purine metabolism; GMP biosynthesis via salvage pathway; GMP from guanine: step 1/1. Functionally, purine salvage pathway enzyme that catalyzes the transfer of the ribosyl-5-phosphate group from 5-phospho-alpha-D-ribose 1-diphosphate (PRPP) to the N9 position of the 6-oxopurines hypoxanthine and guanine to form the corresponding ribonucleotides IMP (inosine 5'-monophosphate) and GMP (guanosine 5'-monophosphate), with the release of PPi. This Lactococcus lactis subsp. lactis (strain IL1403) (Streptococcus lactis) protein is Hypoxanthine-guanine phosphoribosyltransferase (hpt).